The sequence spans 127 residues: MRPLDIVELAEPEEVEVLEPEEDFEQFLLPVINEMREDIASLTREHGRAYLRNRSKLWEMDNMLIQIKTQVEASEESALNHLQNPGDAAEGRAAKRCEKAEEKAKEIAKMAEMLVELVRRIEKSESS.

The stretch at 92–126 (RAAKRCEKAEEKAKEIAKMAEMLVELVRRIEKSES) forms a coiled coil.

Belongs to the MORF4 family-associated protein family. Found in a complex composed of MORF4L1, MRFAP1 and RB1. Interacts via its N-terminus with MORF4L1. Interacts with CSTB and MORF4L2.

The protein localises to the nucleus. It localises to the cytoplasm. The protein resides in the perinuclear region. The sequence is that of MORF4 family-associated protein 1 from Homo sapiens (Human).